Reading from the N-terminus, the 876-residue chain is Leucine--tRNA ligase (876 aa).

The 'HIGH' region signature appears at 43-53 (PYPSGRIHMGH). The 'KMSKS' region signature appears at 632–636 (KMSKS). Lys635 contacts ATP.

The protein belongs to the class-I aminoacyl-tRNA synthetase family.

It localises to the cytoplasm. It catalyses the reaction tRNA(Leu) + L-leucine + ATP = L-leucyl-tRNA(Leu) + AMP + diphosphate. The sequence is that of Leucine--tRNA ligase from Rhizobium etli (strain CIAT 652).